Reading from the N-terminus, the 530-residue chain is ATP-dependent 6-phosphofructokinase 4, chloroplastic (530 aa).

The transit peptide at Met1–Arg54 directs the protein to the chloroplast. A Phosphoserine modification is found at Ser121. ATP-binding positions include Gly152, Arg215 to Gly216, and Gly240 to Thr243. Substrate-binding positions include Thr269–Asp271, Met314–Arg316, Glu370, and Tyr427–Arg430. Residue Asp271 is the Proton acceptor of the active site.

The protein belongs to the phosphofructokinase type A (PFKA) family. PPi-dependent PFK group II subfamily. Atypical ATP-dependent clade 'X' sub-subfamily. As to quaternary structure, homotetramer. It depends on Mg(2+) as a cofactor. In terms of tissue distribution, expressed in leaves, stems and flowers.

The protein resides in the plastid. The protein localises to the chloroplast. The enzyme catalyses beta-D-fructose 6-phosphate + ATP = beta-D-fructose 1,6-bisphosphate + ADP + H(+). It participates in carbohydrate degradation; glycolysis; D-glyceraldehyde 3-phosphate and glycerone phosphate from D-glucose: step 3/4. With respect to regulation, allosterically activated by AMP. In terms of biological role, catalyzes the phosphorylation of D-fructose 6-phosphate to fructose 1,6-bisphosphate by ATP, the first committing step of glycolysis. The chain is ATP-dependent 6-phosphofructokinase 4, chloroplastic from Arabidopsis thaliana (Mouse-ear cress).